The following is an 88-amino-acid chain: Alpha-latrotoxin-associated low molecular weight protein-2 (88 aa).

An N-terminal signal peptide occupies residues 1-19 (MLKLICIAFLVTVLTLVAG). Glutamine 20 bears the Pyrrolidone carboxylic acid mark. 3 cysteine pairs are disulfide-bonded: cysteine 30-cysteine 66, cysteine 46-cysteine 62, and cysteine 49-cysteine 75.

This sequence belongs to the arthropod CHH/MIH/GIH/VIH hormone family. The N-terminus is blocked. Expressed by the venom gland.

It localises to the secreted. May increase the toxicity of alpha-latrotoxin and/or other venom components. Is non-toxic to mice and to the cockroach Periplaneta americana. This Latrodectus tredecimguttatus (Mediterranean black widow spider) protein is Alpha-latrotoxin-associated low molecular weight protein-2.